A 456-amino-acid chain; its full sequence is UDP-N-acetylmuramoylalanine--D-glutamate ligase (456 aa).

Residue 113 to 119 coordinates ATP; the sequence is GTNGKTT.

Belongs to the MurCDEF family.

It localises to the cytoplasm. It catalyses the reaction UDP-N-acetyl-alpha-D-muramoyl-L-alanine + D-glutamate + ATP = UDP-N-acetyl-alpha-D-muramoyl-L-alanyl-D-glutamate + ADP + phosphate + H(+). It functions in the pathway cell wall biogenesis; peptidoglycan biosynthesis. Functionally, cell wall formation. Catalyzes the addition of glutamate to the nucleotide precursor UDP-N-acetylmuramoyl-L-alanine (UMA). In Rippkaea orientalis (strain PCC 8801 / RF-1) (Cyanothece sp. (strain PCC 8801)), this protein is UDP-N-acetylmuramoylalanine--D-glutamate ligase.